The sequence spans 208 residues: ATP synthase subunit beta, chloroplastic (208 aa).

Belongs to the ATPase alpha/beta chains family. As to quaternary structure, F-type ATPases have 2 components, CF(1) - the catalytic core - and CF(0) - the membrane proton channel. CF(1) has five subunits: alpha(3), beta(3), gamma(1), delta(1), epsilon(1). CF(0) has four main subunits: a(1), b(1), b'(1) and c(9-12).

The protein resides in the plastid. It is found in the chloroplast thylakoid membrane. It carries out the reaction ATP + H2O + 4 H(+)(in) = ADP + phosphate + 5 H(+)(out). In terms of biological role, produces ATP from ADP in the presence of a proton gradient across the membrane. The catalytic sites are hosted primarily by the beta subunits. The protein is ATP synthase subunit beta, chloroplastic (atpB) of Hypolepis hostilis (Fern).